The following is a 194-amino-acid chain: uncharacterized protein (194 aa).

CBS domains are found at residues 13–72 (MSFP…PKDV) and 78–133 (MSKK…LLEI). The ACP-type MB domain occupies 159-192 (YINGICENCGYQGRVRLYQGRYLCDECIEEFEEK). Fe cation contacts are provided by Cys164, Cys167, Cys182, and Cys185. Cys164, Cys167, Cys182, and Cys185 together coordinate Zn(2+).

This is an uncharacterized protein from Methanocaldococcus jannaschii (strain ATCC 43067 / DSM 2661 / JAL-1 / JCM 10045 / NBRC 100440) (Methanococcus jannaschii).